The primary structure comprises 350 residues: tRNA dimethylallyltransferase (350 aa).

The tract at residues 1–20 (MMNTERPAGPLRPPHPPHPP) is disordered. The span at 10 to 20 (PLRPPHPPHPP) shows a compositional bias: pro residues. ATP is bound at residue 27 to 34 (GPTASGKT). 29-34 (TASGKT) is a binding site for substrate. 3 interaction with substrate tRNA regions span residues 52-55 (DSAL), 176-180 (QRIAR), and 273-278 (RCVGYR).

This sequence belongs to the IPP transferase family. As to quaternary structure, monomer. Mg(2+) serves as cofactor.

It carries out the reaction adenosine(37) in tRNA + dimethylallyl diphosphate = N(6)-dimethylallyladenosine(37) in tRNA + diphosphate. Functionally, catalyzes the transfer of a dimethylallyl group onto the adenine at position 37 in tRNAs that read codons beginning with uridine, leading to the formation of N6-(dimethylallyl)adenosine (i(6)A). This is tRNA dimethylallyltransferase from Albidiferax ferrireducens (strain ATCC BAA-621 / DSM 15236 / T118) (Rhodoferax ferrireducens).